The chain runs to 238 residues: Enoyl-CoA delta isomerase 3 (238 aa).

This sequence belongs to the enoyl-CoA hydratase/isomerase family.

Its subcellular location is the cytoplasm. It is found in the nucleus. It carries out the reaction a (3Z)-enoyl-CoA = a 4-saturated (2E)-enoyl-CoA. It catalyses the reaction a (3E)-enoyl-CoA = a 4-saturated (2E)-enoyl-CoA. The protein operates within lipid metabolism; fatty acid beta-oxidation. Able to isomerize both 3-cis and 3-trans double bonds into the 2-trans form in a range of enoyl-CoA species. Essential for the beta oxidation of unsaturated fatty acids. This chain is Enoyl-CoA delta isomerase 3, found in Arabidopsis thaliana (Mouse-ear cress).